A 180-amino-acid polypeptide reads, in one-letter code: Ribulose bisphosphate carboxylase small subunit, chloroplastic 4 (180 aa).

Residues 1–56 constitute a chloroplast transit peptide; sequence MASSIVSSAAVATRGNGAQASMVAPFTGLKSTASFPVSRKQNLDITSIASNGGRVS.

It belongs to the RuBisCO small chain family. In terms of assembly, heterohexadecamer of 8 large and 8 small subunits. As to quaternary structure, (Microbial infection) Binds to tobamovirus movement protein; this interaction seems required for viral systemic movement.

It is found in the plastid. Its subcellular location is the chloroplast. It localises to the cell junction. The protein localises to the plasmodesma. Its function is as follows. RuBisCO catalyzes two reactions: the carboxylation of D-ribulose 1,5-bisphosphate, the primary event in carbon dioxide fixation, as well as the oxidative fragmentation of the pentose substrate. Both reactions occur simultaneously and in competition at the same active site. Although the small subunit is not catalytic it is essential for maximal activity. Involved in antiviral defenses. The polypeptide is Ribulose bisphosphate carboxylase small subunit, chloroplastic 4 (Solanum lycopersicum (Tomato)).